The sequence spans 171 residues: Der GTPase-activating protein YihI (171 aa).

2 disordered regions span residues 1–99 and 145–171; these read MKKP…QAEL and LSYD…RGGN. Positions 20-30 are enriched in basic and acidic residues; the sequence is TREELNQEARD. A compositionally biased stretch (basic residues) spans 31-40; that stretch reads RKRLKKHRGH. The segment covering 147-160 has biased composition (acidic residues); the sequence is YDDDEEDDEEDEKQ.

This sequence belongs to the YihI family. Interacts with Der.

In terms of biological role, a GTPase-activating protein (GAP) that modifies Der/EngA GTPase function. May play a role in ribosome biogenesis. This Salmonella agona (strain SL483) protein is Der GTPase-activating protein YihI.